We begin with the raw amino-acid sequence, 205 residues long: Holliday junction branch migration complex subunit RuvA (205 aa).

The tract at residues 1–64 (MIGKLKGIID…EDQIKLFGFR (64 aa)) is domain I. Residues 65–143 (TDTEREWFRL…ALSAVDPAVV (79 aa)) form a domain II region. Residues 144 to 154 (KLSGAIDDNRA) form a flexible linker region. The segment at 154 to 205 (APRAVTDAISALVNLGYGQPQAAAAVATASRTAGEDAETAQLIKLGLKELSK) is domain III.

The protein belongs to the RuvA family. As to quaternary structure, homotetramer. Forms an RuvA(8)-RuvB(12)-Holliday junction (HJ) complex. HJ DNA is sandwiched between 2 RuvA tetramers; dsDNA enters through RuvA and exits via RuvB. An RuvB hexamer assembles on each DNA strand where it exits the tetramer. Each RuvB hexamer is contacted by two RuvA subunits (via domain III) on 2 adjacent RuvB subunits; this complex drives branch migration. In the full resolvosome a probable DNA-RuvA(4)-RuvB(12)-RuvC(2) complex forms which resolves the HJ.

It localises to the cytoplasm. The RuvA-RuvB-RuvC complex processes Holliday junction (HJ) DNA during genetic recombination and DNA repair, while the RuvA-RuvB complex plays an important role in the rescue of blocked DNA replication forks via replication fork reversal (RFR). RuvA specifically binds to HJ cruciform DNA, conferring on it an open structure. The RuvB hexamer acts as an ATP-dependent pump, pulling dsDNA into and through the RuvAB complex. HJ branch migration allows RuvC to scan DNA until it finds its consensus sequence, where it cleaves and resolves the cruciform DNA. The sequence is that of Holliday junction branch migration complex subunit RuvA from Rhodopseudomonas palustris (strain TIE-1).